Here is a 64-residue protein sequence, read N- to C-terminus: Large ribosomal subunit protein bL32 (64 aa).

The tract at residues 1–35 (MAVQKSRVTPSRRGQRRSHDALTAKQLSTDPTSGE) is disordered.

This sequence belongs to the bacterial ribosomal protein bL32 family.

This Xanthomonas campestris pv. campestris (strain 8004) protein is Large ribosomal subunit protein bL32.